A 142-amino-acid polypeptide reads, in one-letter code: Small ribosomal subunit protein uS12 (142 aa).

Residues methionine 1–lysine 43 are disordered. Aspartate 102 carries the post-translational modification 3-methylthioaspartic acid.

The protein belongs to the universal ribosomal protein uS12 family. As to quaternary structure, part of the 30S ribosomal subunit. Contacts proteins S8 and S17. May interact with IF1 in the 30S initiation complex.

Its function is as follows. With S4 and S5 plays an important role in translational accuracy. Interacts with and stabilizes bases of the 16S rRNA that are involved in tRNA selection in the A site and with the mRNA backbone. Located at the interface of the 30S and 50S subunits, it traverses the body of the 30S subunit contacting proteins on the other side and probably holding the rRNA structure together. The combined cluster of proteins S8, S12 and S17 appears to hold together the shoulder and platform of the 30S subunit. The protein is Small ribosomal subunit protein uS12 of Ruminiclostridium cellulolyticum (strain ATCC 35319 / DSM 5812 / JCM 6584 / H10) (Clostridium cellulolyticum).